Here is a 260-residue protein sequence, read N- to C-terminus: Ava biosynthesis cluster protein M (260 aa).

Positions 1–15 (MKVLVLGLCRTGTSS) are cleaved as a signal peptide.

The protein belongs to the cytochrome P450 family.

It functions in the pathway secondary metabolite biosynthesis. Part of the cluster that mediates the biosynthesis of a highly modified cyclo-arginine-tryptophan dipeptide (cRW). The first step of the pathway is perfornmed by the arginine-containing cyclodipeptide synthase (RCPDS) avaA that acts as the scaffold-generating enzyme and is responsible for formation of the cyclo-Arg-Trp (cRW) diketopiperazine. AvaB then acts as a multifunctional flavoenzyme that is responsible for generating the cyclo-Arg-formylkynurenine DKP, which can be deformylated by avaC. AvaB then further catalyzes an additional N-oxidation followed by cyclization and dehydration. The next step is an N-acetylation of the guanidine group catalyzed by the arginine N-acetyltransferase avaD. The roles of the additional enzymes identified within the ava cluster still have to be determined. The polypeptide is Ava biosynthesis cluster protein M (Aspergillus versicolor).